The chain runs to 826 residues: Sister chromatid cohesion protein PDS5 homolog D (826 aa).

HEAT repeat units follow at residues G18–Q54, S55–P94, D151–E188, Q189–R226, and P230–V267. 2 disordered regions span residues P261–S551 and K640–S826. Composition is skewed to basic and acidic residues over residues T269–L286 and R296–R309. Positions S281–K288 match the Nuclear localization signal 1 motif. Polar residues predominate over residues G311–Q323. A Nuclear localization signal 2 motif is present at residues G357–T364. Over residues S396–L408 the composition is skewed to polar residues. The stretch at S424 to N461 is one HEAT 6 repeat. A compositionally biased stretch (basic and acidic residues) spans F437–I450. Residues G451–K460 are compositionally biased toward polar residues. Residues N644–T663 are compositionally biased toward low complexity. A compositionally biased stretch (basic and acidic residues) spans M665–E701. Over residues E702–C724 the composition is skewed to acidic residues. Basic and acidic residues predominate over residues S725–Q746. Acidic residues-rich tracts occupy residues G752 to E763, D771 to D800, and E811 to S826. The stretch at T770 to K825 forms a coiled coil.

The protein belongs to the PDS5 family. Interacts with the cohesin complex.

It is found in the nucleus. Its function is as follows. Cohesin cofactor dispensable during the meiotic division but playing an important role in DNA repair by homologous recombination (HR) probably by helping SMC5/SMC6 complex. Regulator of sister chromatid cohesion in mitosis which may stabilize cohesin complex association with chromatin. May couple sister chromatid cohesion during mitosis to DNA replication. Cohesion ensures that chromosome partitioning is accurate in both meiotic and mitotic cells and plays an important role in DNA repair. The polypeptide is Sister chromatid cohesion protein PDS5 homolog D (Arabidopsis thaliana (Mouse-ear cress)).